We begin with the raw amino-acid sequence, 158 residues long: MQEQATSSIAASSLPSSSERSSSSALHHELKEGMESDDEIRRVPEMGGEATGTTSASGRDGVSAAGQAQPSAGTQRKRGRSPADKENKRLKRLLRNRVSAQQARERKKAYLIDLEARVKELETKNAELEERLSTLQNENQMLRHILKNTTAGAQEGRK.

Low complexity predominate over residues 1 to 25; it reads MQEQATSSIAASSLPSSSERSSSSA. The segment at 1–105 is disordered; it reads MQEQATSSIA…NRVSAQQARE (105 aa). The segment covering 26 to 44 has biased composition (basic and acidic residues); that stretch reads LHHELKEGMESDDEIRRVP. Residues 35–46 are interaction with COP1; the sequence is ESDDEIRRVPEM. The span at 47–58 shows a compositional bias: low complexity; it reads GGEATGTTSASG. Residues 86 to 149 form the bZIP domain; that stretch reads ENKRLKRLLR…QMLRHILKNT (64 aa). Residues 88–108 are basic motif; that stretch reads KRLKRLLRNRVSAQQARERKK. Residues 114-142 form a leucine-zipper region; the sequence is LEARVKELETKNAELEERLSTLQNENQML.

This sequence belongs to the bZIP family. Interacts with COP1. Ubiquitinated by COP1. Ubiquitination takes place in darkness and leads to its subsequent degradation, thereby preventing to activate photomorphogenesis signals.

It localises to the nucleus. Functionally, transcription factor that promotes photomorphogenesis in the light and positively regulates fruit pigmentation and fruit nutritional quality. Probably acts downstream of the light receptor network and directly affects transcription of light-induced genes. This is Transcription factor HY5 (HY5) from Solanum lycopersicum (Tomato).